The chain runs to 333 residues: DNA-directed RNA polymerase subunit alpha (333 aa).

Residues 1 to 234 (MQISVNEFLT…QQLAAFVDLK (234 aa)) form an alpha N-terminal domain (alpha-NTD) region. The alpha C-terminal domain (alpha-CTD) stretch occupies residues 248 to 333 (IDPILLRPVD…SLKKDDKATA (86 aa)).

It belongs to the RNA polymerase alpha chain family. In terms of assembly, homodimer. The RNAP catalytic core consists of 2 alpha, 1 beta, 1 beta' and 1 omega subunit. When a sigma factor is associated with the core the holoenzyme is formed, which can initiate transcription.

The catalysed reaction is RNA(n) + a ribonucleoside 5'-triphosphate = RNA(n+1) + diphosphate. Its function is as follows. DNA-dependent RNA polymerase catalyzes the transcription of DNA into RNA using the four ribonucleoside triphosphates as substrates. The polypeptide is DNA-directed RNA polymerase subunit alpha (Pseudomonas entomophila (strain L48)).